Here is a 552-residue protein sequence, read N- to C-terminus: uncharacterized protein (552 aa).

The DhaL domain occupies 8 to 200; sequence KLFAEMIIQG…LAIVYAGFLK (193 aa).

This is an uncharacterized protein from Staphylococcus saprophyticus subsp. saprophyticus (strain ATCC 15305 / DSM 20229 / NCIMB 8711 / NCTC 7292 / S-41).